We begin with the raw amino-acid sequence, 168 residues long: Small ribosomal subunit protein uS5 (168 aa).

An S5 DRBM domain is found at 13–76 (LEENVVAINR…EDAKRKLITV (64 aa)).

It belongs to the universal ribosomal protein uS5 family. In terms of assembly, part of the 30S ribosomal subunit. Contacts proteins S4 and S8.

With S4 and S12 plays an important role in translational accuracy. Functionally, located at the back of the 30S subunit body where it stabilizes the conformation of the head with respect to the body. This is Small ribosomal subunit protein uS5 from Leuconostoc mesenteroides subsp. mesenteroides (strain ATCC 8293 / DSM 20343 / BCRC 11652 / CCM 1803 / JCM 6124 / NCDO 523 / NBRC 100496 / NCIMB 8023 / NCTC 12954 / NRRL B-1118 / 37Y).